Here is an 88-residue protein sequence, read N- to C-terminus: Small ribosomal subunit protein uS15 (88 aa).

Belongs to the universal ribosomal protein uS15 family. Part of the 30S ribosomal subunit. Forms a bridge to the 50S subunit in the 70S ribosome, contacting the 23S rRNA.

Its function is as follows. One of the primary rRNA binding proteins, it binds directly to 16S rRNA where it helps nucleate assembly of the platform of the 30S subunit by binding and bridging several RNA helices of the 16S rRNA. Functionally, forms an intersubunit bridge (bridge B4) with the 23S rRNA of the 50S subunit in the ribosome. The chain is Small ribosomal subunit protein uS15 from Mycoplasma capricolum subsp. capricolum (strain California kid / ATCC 27343 / NCTC 10154).